The chain runs to 476 residues: UDP-glycosyltransferase 71C3 (476 aa).

UDP-alpha-D-glucose contacts are provided by residues Ser290, 349–351, 366–374, and 388–391; these read APQ, HCGWNSVLE, and YAEQ.

The protein belongs to the UDP-glycosyltransferase family.

In terms of biological role, possesses low quercetin 3-O-glucosyltransferase activity in vitro. This Arabidopsis thaliana (Mouse-ear cress) protein is UDP-glycosyltransferase 71C3 (UGT71C3).